The chain runs to 452 residues: MKLLVILLFSGLITGFRSDSSSSLPPKLLLVSFDGFRADYLNNYEFPHLQNFIKEGVLVEHVKNVFITKTFPNHYSIVTGLYEESHGIVANSMYDAVTKKHFSDSNDKDPFWWNEAVPIWVTNQLQENRSSAAAMWPGTDVPIHNTISSYFMNYNSSVSFEERLNNITMWLNNSNPPVTFATLYWEEPDASGHKYGPEDKENMSRVLKKIDDLIGDLVQKLKMLGLWENLNVIITSDHGMTQCSQDRLINLDVCIDHSYYTLIDLSPVAAILPKINRTEVYNRLKNCSSHMNVYLKEDIPNRFYYQHNDRIQPIILVADEGWTIVLNESSQKCDHGYDNSLPSMHPFLAAHGPAFHKGYKHSTINIVDIYPMMCHILGLKPHPNNGTFGHTKCLLVDQWCINLPEAIAIVIGSLLVLTMLTCLIIIMQNRLSVPRPFSRLQLQEDDDDPLIG.

Positions 1–15 (MKLLVILLFSGLITG) are cleaved as a signal peptide. Topologically, residues 16–406 (FRSDSSSSLP…DQWCINLPEA (391 aa)) are extracellular. Zn(2+) contacts are provided by Asp-34 and Thr-70. Thr-70 acts as the AMP-threonine intermediate in catalysis. Positions 91 and 154 each coordinate substrate. N-linked (GlcNAc...) asparagine glycans are attached at residues Asn-155 and Asn-166. Asp-189, His-193, Asp-237, and His-238 together coordinate Zn(2+). Asp-189 serves as a coordination point for substrate. Cys-254 and Cys-287 are disulfide-bonded. N-linked (GlcNAc...) asparagine glycosylation occurs at Asn-276. His-335 is a Zn(2+) binding site. An intrachain disulfide couples Cys-393 to Cys-400. The chain crosses the membrane as a helical span at residues 407–427 (IAIVIGSLLVLTMLTCLIIIM). At 428–452 (QNRLSVPRPFSRLQLQEDDDDPLIG) the chain is on the cytoplasmic side.

The protein belongs to the nucleotide pyrophosphatase/phosphodiesterase family. Zn(2+) serves as cofactor.

It localises to the cell membrane. The enzyme catalyses P(1),P(3)-bis(5'-adenosyl) triphosphate + H2O = AMP + ADP + 2 H(+). In terms of biological role, hydrolyzes extracellular Ap3A into AMP and ADP, and Ap4A into AMP and ATP. Ap3A and Ap4A are diadenosine polyphosphates thought to induce proliferation of vascular smooth muscle cells. Acts as a procoagulant, mediating platelet aggregation at the site of nascent thrombus via release of ADP from Ap3A and activation of ADP receptors. This chain is Bis(5'-adenosyl)-triphosphatase ENPP4 (ENPP4), found in Pongo abelii (Sumatran orangutan).